The sequence spans 350 residues: Major allergen Mal f 1 (350 aa).

A signal peptide spans 1 to 22 (MRYSTVLAALALLGTSAVSVLA).

Its subcellular location is the secreted. The protein localises to the cell wall. This chain is Major allergen Mal f 1, found in Malassezia furfur (Pityriasis versicolor infection agent).